The following is a 139-amino-acid chain: uncharacterized protein (139 aa).

To E.coli YebE.

This is an uncharacterized protein from Yersinia enterocolitica.